A 947-amino-acid chain; its full sequence is Microtubule cross-linking factor 3 (947 aa).

The signal sequence occupies residues 1–21 (MSQPPIGGAAPATAAASPAAA). Disordered regions lie at residues 1–251 (MSQP…SYWK), 266–368 (KERA…TLKN), and 496–524 (LSLK…DNED). 3 stretches are compositionally biased toward low complexity: residues 9 to 24 (AAPA…AATE), 72 to 81 (QQQLQQQQQQ), and 109 to 137 (APKG…ALGG). Positions 141–151 (GPPEEPPRELE) are enriched in basic and acidic residues. Residues 164 to 180 (GEGGGGGGEGGGAGGGS) are compositionally biased toward gly residues. Positions 214 to 236 (ASPSPSSSSAGKTPGTGSRNSGS) are enriched in low complexity. Over residues 237–248 (GVAGGGSGGGGS) the composition is skewed to gly residues. 2 stretches are compositionally biased toward low complexity: residues 287 to 297 (SSRSSPVSGPP) and 304 to 325 (AVAS…AEGS). Residues 342 to 726 (HPQQLQEQEE…GKVMQLQYEN (385 aa)) are a coiled coil. Composition is skewed to basic and acidic residues over residues 355-368 (EMEK…TLKN) and 496-513 (LSLK…EKKA). Serine 569 is subject to Phosphoserine. Positions 743–786 (GIRGSPRDSDAESDAGKKESDDDSRPPHRKREGPIGGESDSEEV) are disordered. Positions 747-768 (SPRDSDAESDAGKKESDDDSRP) are enriched in basic and acidic residues. Residue serine 781 is modified to Phosphoserine. Residues 811-835 (DRQQMKDIRSEAERLGKTIDRLIAD) are a coiled coil. Residues 915 to 935 (PIILLILILVLFSSLSYTTIF) traverse the membrane as a helical segment.

The protein belongs to the MTCL family.

Its subcellular location is the membrane. This chain is Microtubule cross-linking factor 3, found in Homo sapiens (Human).